We begin with the raw amino-acid sequence, 223 residues long: Ras-related protein Rab-21 (223 aa).

Position 2 is an N-acetylalanine (Ala2). Residues Gly26, Gly29, Lys30, Thr31, Ser32, Asn43, Asp44, His46, Thr48, and Thr49 each contribute to the GTP site. Thr31 contacts Mg(2+). The Switch 1 signature appears at 41 to 54 (KFNDKHITTLQASF). Mg(2+) contacts are provided by Thr49 and Asp72. A Switch 2 motif is present at residues 74-92 (AGQERFHALGPIYYRDSNG). Residues Gly75, Asn130, Lys131, Asp133, Ala161, and Lys162 each contribute to the GTP site. 2 S-geranylgeranyl cysteine lipidation sites follow: Cys219 and Cys220. Residue Cys220 is modified to Cysteine methyl ester. The propeptide at 221-223 (SSG) is removed in mature form.

Belongs to the small GTPase superfamily. Rab family. In terms of assembly, interacts with the cytoplasmic tail of integrins ITGA1, ITGA2, ITGA5, ITGA6, ITGA11 and ITGB1; this interaction is dependent upon its GDP/GTP cycle. Interacts with ANKRD27. Interacts (active GTP-bound form) with TMED10; the interaction is indirect and regulates TMED10 abundance and localization at the Golgi. Mg(2+) is required as a cofactor.

The protein localises to the endoplasmic reticulum membrane. The protein resides in the golgi apparatus. It is found in the trans-Golgi network. Its subcellular location is the golgi apparatus membrane. It localises to the early endosome membrane. The protein localises to the cytoplasmic vesicle membrane. The protein resides in the cleavage furrow. It is found in the cell projection. Its subcellular location is the neuron projection. It carries out the reaction GTP + H2O = GDP + phosphate + H(+). Regulated by guanine nucleotide exchange factors (GEFs) including ANKRD27 and RABGEF1, which promote the exchange of bound GDP for free GTP. Regulated by GTPase activating proteins (GAPs) which increase the GTP hydrolysis activity. Inhibited by GDP dissociation inhibitors (GDIs). Its function is as follows. The small GTPases Rab are key regulators of intracellular membrane trafficking, from the formation of transport vesicles to their fusion with membranes. Rabs cycle between an inactive GDP-bound form and an active GTP-bound form that is able to recruit to membranes different sets of downstream effectors directly responsible for vesicle formation, movement, tethering and fusion. RAB21 is involved in membrane trafficking control. Regulates integrin internalization and recycling, but does not influence the traffic of endosomally translocated receptors in general. As a result, may regulate cell adhesion and migration. During the mitosis of adherent cells, controls the endosomal trafficking of integrins which is required for the successful completion of cytokinesis. Involved in neurite growth. Modulates protein levels of the cargo receptors TMED2 and TMED10, and required for appropriate Golgi localization of TMED10. This Canis lupus familiaris (Dog) protein is Ras-related protein Rab-21 (RAB21).